Reading from the N-terminus, the 353-residue chain is Putative glycosyltransferase TagX (353 aa).

Belongs to the glycosyltransferase 2 family.

The polypeptide is Putative glycosyltransferase TagX (tagX) (Staphylococcus aureus (strain Mu50 / ATCC 700699)).